Here is a 919-residue protein sequence, read N- to C-terminus: Lipoxygenase 3, chloroplastic (919 aa).

Residues 1-52 (MALAKELMGYPLITERSSLVSSASHFKKRTQSTQFSINPFDRRPRKTKSGVV) constitute a chloroplast transit peptide. Positions 86 to 222 (VRAVVTVRNK…DHPDKRIFFT (137 aa)) constitute a PLAT domain. The Lipoxygenase domain maps to 225–919 (PYLPNETPSG…CRGVPNSVSI (695 aa)). Positions 272-310 (PDKSSELSRPKLGGKEVPYPRRCRTGRQSTVSDKDAESR) are disordered. Residues His-578, His-583, His-770, Asn-774, and Ile-919 each coordinate Fe cation.

Belongs to the lipoxygenase family. Fe cation serves as cofactor. Expressed in roots and leaves.

Its subcellular location is the plastid. It localises to the chloroplast. The catalysed reaction is (9Z,12Z)-octadecadienoate + O2 = (13S)-hydroperoxy-(9Z,11E)-octadecadienoate. The enzyme catalyses (9Z,12Z,15Z)-octadecatrienoate + O2 = (13S)-hydroperoxy-(9Z,11E,15Z)-octadecatrienoate. Its pathway is lipid metabolism; oxylipin biosynthesis. 13S-lipoxygenase that can use linolenic acid as substrates. Plant lipoxygenases may be involved in a number of diverse aspects of plant physiology including growth and development, pest resistance, and senescence or responses to wounding. Catalyzes the hydroperoxidation of lipids containing a cis,cis-1,4-pentadiene structure. The protein is Lipoxygenase 3, chloroplastic (LOX3) of Arabidopsis thaliana (Mouse-ear cress).